The following is a 1605-amino-acid chain: Zinc finger protein jing homolog (1605 aa).

Over residues 1–15 (MQHQSLSVRNSSGIS) the composition is skewed to polar residues. Disordered stretches follow at residues 1–28 (MQHQ…VRSS), 60–117 (QWPW…QQSN), 359–388 (TRKV…TSDP), 441–468 (QQHQ…TQAQ), 856–877 (STTS…PPKL), 917–947 (TKAT…ASCT), and 991–1213 (NDSG…TDFL). Residues 64 to 117 (NTSNNTNATNSNNVQSNNNSSTATSNSSTNSNNSPAVNTPTTQNQSQPTTQQSN) are compositionally biased toward low complexity. A compositionally biased stretch (polar residues) spans 991–1000 (NDSGIVANSS). Residues 1021–1030 (PQKKDEESRQ) show a composition bias toward basic and acidic residues. Residues 1035–1049 (SPVPSPSPLSEPPVI) are compositionally biased toward pro residues. Acidic residues-rich tracts occupy residues 1053–1090 (SEPE…DEPH) and 1099–1110 (SSEAVELPELED). Residues 1112–1126 (QPSPPLPCELPPPPT) are compositionally biased toward pro residues. Residues 1135–1149 (LSLPPSQKSPKSLLL) show a composition bias toward low complexity. Residues 1165–1201 (QESMSSDQDYSNQSPLDESSPTGSAEPSESQRSTTPV) show a composition bias toward polar residues. The C2H2-type 1 zinc finger occupies 1260–1285 (GVCYWSNCDAQFDTSSKLLDHLQIQH). Residues 1293 to 1320 (FACLWDGCKVHNKESCSRRWLERHVLSH) form a C2H2-type 2; degenerate zinc finger. A C2H2-type 3 zinc finger spans residues 1326–1350 (HKCIVAGCGMRFGSQLALEKHVNHH). Disordered stretches follow at residues 1352–1371 (NNTD…LPKV) and 1511–1605 (CSRS…SSTS). Low complexity-rich tracts occupy residues 1511-1537 (CSRS…SLIS) and 1556-1605 (KQSY…SSTS).

Belongs to the AEBP2/jing C2H2-type zinc-finger family.

Its subcellular location is the nucleus. Functionally, may functionally interact with Polycomb group (PcG) and trithorax group (trxG) proteins to repress transcription. The sequence is that of Zinc finger protein jing homolog from Aedes aegypti (Yellowfever mosquito).